A 110-amino-acid chain; its full sequence is UPF0060 membrane protein Bamb_1160 (110 aa).

4 helical membrane passes run 9 to 29, 34 to 54, 66 to 86, and 88 to 108; these read ALFAVTALAEIVGCYLPWLVL, PVWLLVPAALSLALFAWLLTL, YGGVYIAVALIWLRVVDGVAL, and RWDAAGAVLALGGMAVIALQP.

Belongs to the UPF0060 family.

It is found in the cell inner membrane. The sequence is that of UPF0060 membrane protein Bamb_1160 from Burkholderia ambifaria (strain ATCC BAA-244 / DSM 16087 / CCUG 44356 / LMG 19182 / AMMD) (Burkholderia cepacia (strain AMMD)).